The sequence spans 534 residues: EH domain-containing protein 1 (534 aa).

Met1 is modified (N-acetylmethionine). A Dynamin-type G domain is found at 55 to 286 (FDNKPMVLLV…DLFKDIQSLP (232 aa)). The tract at residues 65–72 (GQYSTGKT) is G1 motif. ATP is bound at residue 65–72 (GQYSTGKT). Positions 91-92 (EP) are G2 motif. A G3 motif region spans residues 153–156 (DTPG). Residues 198-227 (DEFSEVIKALKNHEDKIRVVLNKADQIETQ) are a coiled coil. Residues 219-222 (NKAD) form a G4 motif region. Residue Lys220 coordinates ATP. Position 243 (Ile243) is a region of interest, G5 motif. Position 258 (Trp258) interacts with ATP. 2 positions are modified to phosphoserine: Ser355 and Ser456. An EH domain is found at 444-532 (DKPTYDEIFY…PHLIPPSKRR (89 aa)). The EF-hand domain maps to 476-511 (LPNTVLGKIWKLADVDKDGLLDDEEFALANHLIKVK). Ca(2+)-binding residues include Asp489, Asp491, Asp493, and Glu500.

The protein belongs to the TRAFAC class dynamin-like GTPase superfamily. Dynamin/Fzo/YdjA family. EHD subfamily. In terms of assembly, homooligomer, and heterooligomer with EHD2, EHD3 and EHD4, ATP-binding is required for heterooligomerization. Interacts (via EH domain) with MICALL1 (via NPF1 motif); the interaction is direct and recruits EHD1 to membranes. Interacts with RAB35; the interaction is indirect through MICALL1 and recruits EHD1 to membranes. Interacts (via EH domain) with PACSIN2 (via NPF motifs); regulates localization to tubular recycling endosome membranes. Interacts with PACSIN1. Interacts with RAB8A. Interacts with FER1L5 (via second C2 domain). Interacts with MYOF. Interacts with ZFYVE20. Interacts (via EH domain) with RAB11FIP2.

It localises to the recycling endosome membrane. The protein localises to the early endosome membrane. Its subcellular location is the cell membrane. The protein resides in the cell projection. It is found in the cilium membrane. In terms of biological role, ATP- and membrane-binding protein that controls membrane reorganization/tubulation upon ATP hydrolysis. In vitro causes vesiculation of endocytic membranes. Acts in early endocytic membrane fusion and membrane trafficking of recycling endosomes. Recruited to endosomal membranes upon nerve growth factor stimulation, indirectly regulates neurite outgrowth. Plays a role in myoblast fusion. Involved in the unidirectional retrograde dendritic transport of endocytosed BACE1 and in efficient sorting of BACE1 to axons implicating a function in neuronal APP processing. Plays a role in the formation of the ciliary vesicle (CV), an early step in cilium biogenesis. Proposed to be required for the fusion of distal appendage vesicles (DAVs) to form the CV by recruiting SNARE complex component SNAP29. Is required for recruitment of transition zone proteins CEP290, RPGRIP1L, TMEM67 and B9D2, and of IFT20 following DAV reorganization before Rab8-dependent ciliary membrane extension. Required for the loss of CCP110 form the mother centriole essential for the maturation of the basal body during ciliogenesis. The polypeptide is EH domain-containing protein 1 (Rattus norvegicus (Rat)).